A 382-amino-acid chain; its full sequence is 3-dehydroquinate synthase (382 aa).

NAD(+) contacts are provided by residues 81–86 (EGEGSK), 115–119 (GVVGD), 139–140 (TS), Lys-152, and Lys-161. Positions 194, 256, and 274 each coordinate Zn(2+).

The protein belongs to the sugar phosphate cyclases superfamily. Dehydroquinate synthase family. Co(2+) serves as cofactor. Requires Zn(2+) as cofactor. NAD(+) is required as a cofactor.

The protein localises to the cytoplasm. The catalysed reaction is 7-phospho-2-dehydro-3-deoxy-D-arabino-heptonate = 3-dehydroquinate + phosphate. Its pathway is metabolic intermediate biosynthesis; chorismate biosynthesis; chorismate from D-erythrose 4-phosphate and phosphoenolpyruvate: step 2/7. Its function is as follows. Catalyzes the conversion of 3-deoxy-D-arabino-heptulosonate 7-phosphate (DAHP) to dehydroquinate (DHQ). This is 3-dehydroquinate synthase from Bradyrhizobium sp. (strain BTAi1 / ATCC BAA-1182).